A 328-amino-acid polypeptide reads, in one-letter code: Phenylalanine--tRNA ligase alpha subunit (328 aa).

Position 245 (Glu245) interacts with Mg(2+).

The protein belongs to the class-II aminoacyl-tRNA synthetase family. Phe-tRNA synthetase alpha subunit type 1 subfamily. In terms of assembly, tetramer of two alpha and two beta subunits. The cofactor is Mg(2+).

Its subcellular location is the cytoplasm. The catalysed reaction is tRNA(Phe) + L-phenylalanine + ATP = L-phenylalanyl-tRNA(Phe) + AMP + diphosphate + H(+). This is Phenylalanine--tRNA ligase alpha subunit (pheS) from Helicobacter pylori (strain ATCC 700392 / 26695) (Campylobacter pylori).